The primary structure comprises 734 residues: Polyribonucleotide nucleotidyltransferase (734 aa).

Mg(2+) contacts are provided by D497 and D503. The KH domain maps to 564 to 623; sequence PRIIHITIDPDKIRDVIGPGGKVIKKIVEETGAEIDIEDDGRVFIAAVDQEKGRKAQEII. In terms of domain architecture, S1 motif spans 633 to 707; it reads GEIYTGRVTR…SQGRLKLSKK (75 aa). The tract at residues 700 to 734 is disordered; that stretch reads GRLKLSKKEATPPPESTAMKEGRAHRPSRRRESAR. The span at 717 to 734 shows a compositional bias: basic and acidic residues; that stretch reads AMKEGRAHRPSRRRESAR.

The protein belongs to the polyribonucleotide nucleotidyltransferase family. Mg(2+) is required as a cofactor.

Its subcellular location is the cytoplasm. The enzyme catalyses RNA(n+1) + phosphate = RNA(n) + a ribonucleoside 5'-diphosphate. Functionally, involved in mRNA degradation. Catalyzes the phosphorolysis of single-stranded polyribonucleotides processively in the 3'- to 5'-direction. The chain is Polyribonucleotide nucleotidyltransferase from Pelotomaculum thermopropionicum (strain DSM 13744 / JCM 10971 / SI).